Here is a 492-residue protein sequence, read N- to C-terminus: 56 kDa U1 small nuclear ribonucleoprotein component (492 aa).

Residues 1-15 (MRPRRRGLAYHHTKP) show a composition bias toward basic residues. Disordered regions lie at residues 1–35 (MRPR…QRRK) and 300–371 (DQFP…NKPG). The segment covering 18–30 (QLSQGHYPTTSND) has biased composition (polar residues). Positions 310-321 (SNSPSSNSISSS) are enriched in low complexity. A compositionally biased stretch (polar residues) spans 329 to 353 (TSYQTQPQRHAVNKPSNVLNSSNRH).

In terms of assembly, component of the 18S U1 snRNP particle, a subcomplex of the spliceosome. Interacts with the nuclear cap-binding complex CBC1-CBC2 (yCBC). Directly contacts intronic sequences of substrate pre-RNA.

Its subcellular location is the nucleus. In terms of biological role, component of the U1 snRNP particle, which recognizes and binds the 5'-splice site of pre-mRNA. Together with other non-snRNP factors, U1 snRNP forms the spliceosomal commitment complex, that targets pre-mRNA to the splicing pathway. This is 56 kDa U1 small nuclear ribonucleoprotein component (SNU56) from Saccharomyces cerevisiae (strain ATCC 204508 / S288c) (Baker's yeast).